Reading from the N-terminus, the 430-residue chain is MSMITEIYAREILDSRGNPTVEVEVYTEDGGFGRALVPSGASTGEHEAVELRDGDKSRYLGKGVLKAVDNVNEKLAPEIIGYDVFDQAGIDKKMIDLDGTKNKGNFGANAILGISMAAARAAADELGLPLYTYLGGFNAKTLPTPMMNIINGGSHADNNVDFQEFMIMPVGAPTFKEALRMGAEIFHALKSVLSGMGLNTAVGDEGGFAPNLKSNEEAITVILEAIEKAGYKAGEDVYLAMDVASSEFYDKAAGKYNLAGEGKVLSTEELVEFYAQLVDKYPIISIEDGCDENDWDGHKLLTDRIGHKVQLVGDDLFVTNTEKLAEGIEKGIANSILIKVNQIGTLTETFDAIEMAKKAGYTAVVSHRSGETEDSTIADIAVATNAGQIKTGSLSRTDRIAKYNQLLRIEDMLSDVAVYDGIKSFYNLKK.

Gln163 serves as a coordination point for (2R)-2-phosphoglycerate. Catalysis depends on Glu205, which acts as the Proton donor. Residues Asp242, Glu287, and Asp314 each contribute to the Mg(2+) site. The (2R)-2-phosphoglycerate site is built by Lys339, Arg368, Ser369, and Lys390. The Proton acceptor role is filled by Lys339.

Belongs to the enolase family. Mg(2+) is required as a cofactor.

It is found in the cytoplasm. The protein resides in the secreted. Its subcellular location is the cell surface. The catalysed reaction is (2R)-2-phosphoglycerate = phosphoenolpyruvate + H2O. The protein operates within carbohydrate degradation; glycolysis; pyruvate from D-glyceraldehyde 3-phosphate: step 4/5. Functionally, catalyzes the reversible conversion of 2-phosphoglycerate (2-PG) into phosphoenolpyruvate (PEP). It is essential for the degradation of carbohydrates via glycolysis. This is Enolase from Exiguobacterium sibiricum (strain DSM 17290 / CCUG 55495 / CIP 109462 / JCM 13490 / 255-15).